The chain runs to 494 residues: MTNLTDLGIAAIRDGVARGDFTATEVATAFNAAVEAAQPALNAFIVTTPEEALEAAGKVDADRTAGRPLGKMAGVPIGMKDLFATRGTQTTAASKILEGFMPEYESTVSQKLWDAGAGMLGKLNLDQFAMGSSNETSAFGNVISPWRRPGDTAPLAPGGSSGGSSSAVAARIAPAATGTDTGGSIRQPAAFTGISGIKPTYGRCSRWGIVAFASSLDQAGPMARDVADCAIMLEAMAGFDPKDSTSLDMPVPEWTANLDPDMRGKKVGIPREYRLDGMDPDVARSWEDGIAWLKDAGAEIVEISLPHTKYALPTYYIIAPAEASSNLARYDGVRYGLRDLPEGAGLQDMYAATRAAGFGPEVKRRILIGTYVLSAGFYDAYYTQAQKVRTLISHDFTNAFREVDVILAPTAPSSAFALGEKSADPLEMYLNDVFSVPASLAGLPAMSVPAGLDRNGLPLGLQVIGRAFDEQGVLNAGLALEQRARFSARPAKWW.

Active-site charge relay system residues include Lys80 and Ser160. Residues 140–168 (GNVISPWRRPGDTAPLAPGGSSGGSSSAV) are disordered. The Acyl-ester intermediate role is filled by Ser184.

This sequence belongs to the amidase family. GatA subfamily. Heterotrimer of A, B and C subunits.

It carries out the reaction L-glutamyl-tRNA(Gln) + L-glutamine + ATP + H2O = L-glutaminyl-tRNA(Gln) + L-glutamate + ADP + phosphate + H(+). Allows the formation of correctly charged Gln-tRNA(Gln) through the transamidation of misacylated Glu-tRNA(Gln) in organisms which lack glutaminyl-tRNA synthetase. The reaction takes place in the presence of glutamine and ATP through an activated gamma-phospho-Glu-tRNA(Gln). The polypeptide is Glutamyl-tRNA(Gln) amidotransferase subunit A (Novosphingobium aromaticivorans (strain ATCC 700278 / DSM 12444 / CCUG 56034 / CIP 105152 / NBRC 16084 / F199)).